Here is a 399-residue protein sequence, read N- to C-terminus: tRNA-specific 2-thiouridylase MnmA (399 aa).

ATP contacts are provided by residues 21 to 28 (AMSGGVDS) and leucine 47. Cysteine 115 serves as the catalytic Nucleophile. Cysteine 115 and cysteine 211 are joined by a disulfide. ATP is bound at residue glycine 139. Positions 161 to 163 (RDQ) are interaction with tRNA. Cysteine 211 serves as the catalytic Cysteine persulfide intermediate.

It belongs to the MnmA/TRMU family.

It is found in the cytoplasm. It catalyses the reaction S-sulfanyl-L-cysteinyl-[protein] + uridine(34) in tRNA + AH2 + ATP = 2-thiouridine(34) in tRNA + L-cysteinyl-[protein] + A + AMP + diphosphate + H(+). Catalyzes the 2-thiolation of uridine at the wobble position (U34) of tRNA, leading to the formation of s(2)U34. The chain is tRNA-specific 2-thiouridylase MnmA from Parvibaculum lavamentivorans (strain DS-1 / DSM 13023 / NCIMB 13966).